Reading from the N-terminus, the 252-residue chain is MSKSVPLQRIVLVAALMATGGLAGGCSSIDRLAAIGERPALTPIENPTTQPGYKPVQMPMPKPEVASYNANSLWRNGSRAFFKDQRAAKVGDILTVTVNFTDKANIANETQRSRTSKEDSGITDFIGSKTITTPATAVLPGRILTTDSTSSSDGKGSVQRQEALQTNVAAVVTQVLPNGNLVVEGKQEIRVNFEIRELIVAGIVRPEDIQSDNTIDSSKIAQARIAYGGRGQITDVQQPRYGQQVMDVLLPF.

Positions 1–25 (MSKSVPLQRIVLVAALMATGGLAGG) are cleaved as a signal peptide. Cysteine 26 is lipidated: N-palmitoyl cysteine. The S-diacylglycerol cysteine moiety is linked to residue cysteine 26.

It belongs to the FlgH family. As to quaternary structure, the basal body constitutes a major portion of the flagellar organelle and consists of four rings (L,P,S, and M) mounted on a central rod.

The protein localises to the cell outer membrane. Its subcellular location is the bacterial flagellum basal body. In terms of biological role, assembles around the rod to form the L-ring and probably protects the motor/basal body from shearing forces during rotation. This chain is Flagellar L-ring protein, found in Rhodopseudomonas palustris (strain ATCC BAA-98 / CGA009).